The sequence spans 589 residues: Zinc finger protein 131 (589 aa).

In terms of domain architecture, BTB spans 34–98 (TDITLIVDGH…TYTAKLMIQG (65 aa)). Positions 137-148 (TGKNEAKKRKIA) match the Nuclear localization signal 1 motif. Over residues 224 to 234 (GDRKGQIKEDG) the composition is skewed to basic and acidic residues. The disordered stretch occupies residues 224 to 247 (GDRKGQIKEDGCPSDPTSKQEHMK). C2H2-type zinc fingers lie at residues 254–277 (FKCE…NCYH) and 294–316 (HVCQ…LRKH). Residues K255 and K261 each participate in a glycyl lysine isopeptide (Lys-Gly) (interchain with G-Cter in SUMO2) cross-link. Residues 283–294 (VSKKQRTGKKIH) carry the Nuclear localization signal 2 motif. Residues 322 to 347 (FECPNCHERFARNSTLKCHLTACQTG) form a C2H2-type 3; degenerate zinc finger. 2 consecutive C2H2-type zinc fingers follow at residues 358–380 (YECQ…LVIH) and 386–409 (NHCT…SDAH). Basic and acidic residues predominate over residues 539 to 583 (NQEERESSQADAAEAAREDHEDAEDLETKPTVDSEAEKAENEDRT). Residues 539-589 (NQEERESSQADAAEAAREDHEDAEDLETKPTVDSEAEKAENEDRTAMPVLE) form a disordered region. A Glycyl lysine isopeptide (Lys-Gly) (interchain with G-Cter in SUMO) cross-link involves residue K567.

It belongs to the krueppel C2H2-type zinc-finger protein family. Post-translationally, monosumoylated at Lys-567 by CBX4 and UHRF2. Sumoylation may potentiate ZNF131 inhibition of estrogen signaling. Sumoylation does not interfere with ubiquitination. In terms of processing, ubiquitinated.

The protein localises to the nucleus. May be involved in transcriptional regulation as a repressor of ESR1/ER-alpha signaling. Plays a role during development and organogenesis as well as in the function of the adult central nervous system. The polypeptide is Zinc finger protein 131 (ZNF131) (Pongo abelii (Sumatran orangutan)).